A 405-amino-acid polypeptide reads, in one-letter code: Arginine biosynthesis bifunctional protein ArgJ (405 aa).

Positions 152, 178, 189, 276, 400, and 405 each coordinate substrate. T189 acts as the Nucleophile in catalysis.

Belongs to the ArgJ family. As to quaternary structure, heterotetramer of two alpha and two beta chains.

The protein resides in the cytoplasm. It catalyses the reaction N(2)-acetyl-L-ornithine + L-glutamate = N-acetyl-L-glutamate + L-ornithine. The enzyme catalyses L-glutamate + acetyl-CoA = N-acetyl-L-glutamate + CoA + H(+). The protein operates within amino-acid biosynthesis; L-arginine biosynthesis; L-ornithine and N-acetyl-L-glutamate from L-glutamate and N(2)-acetyl-L-ornithine (cyclic): step 1/1. It participates in amino-acid biosynthesis; L-arginine biosynthesis; N(2)-acetyl-L-ornithine from L-glutamate: step 1/4. Its function is as follows. Catalyzes two activities which are involved in the cyclic version of arginine biosynthesis: the synthesis of N-acetylglutamate from glutamate and acetyl-CoA as the acetyl donor, and of ornithine by transacetylation between N(2)-acetylornithine and glutamate. In Pseudomonas fluorescens (strain Pf0-1), this protein is Arginine biosynthesis bifunctional protein ArgJ.